The following is a 292-amino-acid chain: 5,10-methylenetetrahydrofolate reductase (292 aa).

Catalysis depends on glutamate 28, which acts as the Proton donor/acceptor. Threonine 59 contacts NADH. Tyrosine 60, alanine 62, histidine 88, arginine 118, glycine 119, aspartate 120, alanine 132, tyrosine 152, histidine 156, aspartate 165, asparagine 168, lysine 171, and lysine 172 together coordinate FAD. Residue aspartate 120 participates in (6S)-5-methyl-5,6,7,8-tetrahydrofolate binding. NADH is bound at residue glutamine 183. Position 183 (glutamine 183) interacts with (6S)-5-methyl-5,6,7,8-tetrahydrofolate.

Belongs to the methylenetetrahydrofolate reductase family. The cofactor is FAD.

The catalysed reaction is (6S)-5-methyl-5,6,7,8-tetrahydrofolate + NAD(+) = (6R)-5,10-methylene-5,6,7,8-tetrahydrofolate + NADH + H(+). It functions in the pathway one-carbon metabolism; tetrahydrofolate interconversion. Its pathway is amino-acid biosynthesis; L-methionine biosynthesis via de novo pathway. Its function is as follows. Catalyzes the NADH-dependent reduction of 5,10-methylenetetrahydrofolate to 5-methyltetrahydrofolate. Is required to provide the methyl group necessary for methionine synthetase to convert homocysteine to methionine; the methyl group is given by 5-methyltetrahydrofolate. The protein is 5,10-methylenetetrahydrofolate reductase (metF) of Buchnera aphidicola subsp. Acyrthosiphon pisum (strain APS) (Acyrthosiphon pisum symbiotic bacterium).